The sequence spans 551 residues: Dihydroxy-acid dehydratase (551 aa).

Cysteine 52 contributes to the [2Fe-2S] cluster binding site. Mg(2+) is bound at residue aspartate 84. [2Fe-2S] cluster is bound at residue cysteine 125. Aspartate 126 and lysine 127 together coordinate Mg(2+). Lysine 127 is modified (N6-carboxylysine). Cysteine 197 is a binding site for [2Fe-2S] cluster. A Mg(2+)-binding site is contributed by glutamate 448. The Proton acceptor role is filled by serine 474.

The protein belongs to the IlvD/Edd family. Homodimer. [2Fe-2S] cluster serves as cofactor. The cofactor is Mg(2+).

The catalysed reaction is (2R)-2,3-dihydroxy-3-methylbutanoate = 3-methyl-2-oxobutanoate + H2O. It carries out the reaction (2R,3R)-2,3-dihydroxy-3-methylpentanoate = (S)-3-methyl-2-oxopentanoate + H2O. It functions in the pathway amino-acid biosynthesis; L-isoleucine biosynthesis; L-isoleucine from 2-oxobutanoate: step 3/4. Its pathway is amino-acid biosynthesis; L-valine biosynthesis; L-valine from pyruvate: step 3/4. In terms of biological role, functions in the biosynthesis of branched-chain amino acids. Catalyzes the dehydration of (2R,3R)-2,3-dihydroxy-3-methylpentanoate (2,3-dihydroxy-3-methylvalerate) into 2-oxo-3-methylpentanoate (2-oxo-3-methylvalerate) and of (2R)-2,3-dihydroxy-3-methylbutanoate (2,3-dihydroxyisovalerate) into 2-oxo-3-methylbutanoate (2-oxoisovalerate), the penultimate precursor to L-isoleucine and L-valine, respectively. The polypeptide is Dihydroxy-acid dehydratase (Francisella tularensis subsp. tularensis (strain FSC 198)).